The chain runs to 340 residues: Outer membrane protein U (340 aa).

Positions 1–21 (MKKTLIALSVSAAAVATGVNA) are cleaved as a signal peptide.

This sequence belongs to the Gram-negative porin family. Homotrimer.

The protein localises to the cell outer membrane. Forms pores that allow passive diffusion of small molecules across the outer membrane. The sequence is that of Outer membrane protein U (ompU) from Vibrio vulnificus (strain CMCP6).